The primary structure comprises 215 residues: Urease accessory protein UreG (215 aa).

Residue Gly24–Thr31 coordinates GTP.

It belongs to the SIMIBI class G3E GTPase family. UreG subfamily. In terms of assembly, homodimer. UreD, UreF and UreG form a complex that acts as a GTP-hydrolysis-dependent molecular chaperone, activating the urease apoprotein by helping to assemble the nickel containing metallocenter of UreC. The UreE protein probably delivers the nickel.

It localises to the cytoplasm. In terms of biological role, facilitates the functional incorporation of the urease nickel metallocenter. This process requires GTP hydrolysis, probably effectuated by UreG. The protein is Urease accessory protein UreG of Burkholderia cenocepacia (strain HI2424).